The following is a 65-amino-acid chain: MNKTLLDILVCPVTKASLTLSKDGTELISKVGGMAYPVRDGIPVLLETEARTLTADERLDSGSAK.

This sequence belongs to the UPF0434 family.

The protein is UPF0434 protein Mmwyl1_2153 of Marinomonas sp. (strain MWYL1).